A 421-amino-acid chain; its full sequence is 4-hydroxy-3-methylbut-2-en-1-yl diphosphate synthase (flavodoxin) (421 aa).

Residues 1-20 (MHDAVTRPTPPSDATSWPRR) are disordered. The [4Fe-4S] cluster site is built by Cys-311, Cys-314, Cys-357, and Glu-364.

This sequence belongs to the IspG family. Requires [4Fe-4S] cluster as cofactor.

The enzyme catalyses (2E)-4-hydroxy-3-methylbut-2-enyl diphosphate + oxidized [flavodoxin] + H2O + 2 H(+) = 2-C-methyl-D-erythritol 2,4-cyclic diphosphate + reduced [flavodoxin]. The protein operates within isoprenoid biosynthesis; isopentenyl diphosphate biosynthesis via DXP pathway; isopentenyl diphosphate from 1-deoxy-D-xylulose 5-phosphate: step 5/6. Functionally, converts 2C-methyl-D-erythritol 2,4-cyclodiphosphate (ME-2,4cPP) into 1-hydroxy-2-methyl-2-(E)-butenyl 4-diphosphate. This is 4-hydroxy-3-methylbut-2-en-1-yl diphosphate synthase (flavodoxin) from Stenotrophomonas maltophilia (strain R551-3).